The following is an 89-amino-acid chain: Large ribosomal subunit protein bL31B (89 aa).

Belongs to the bacterial ribosomal protein bL31 family. Type B subfamily. In terms of assembly, part of the 50S ribosomal subunit.

This is Large ribosomal subunit protein bL31B from Haemophilus ducreyi (strain 35000HP / ATCC 700724).